A 132-amino-acid chain; its full sequence is Translation initiation factor 5A (132 aa).

Residue lysine 36 is modified to Hypusine.

The protein belongs to the eIF-5A family.

Its subcellular location is the cytoplasm. Functionally, functions by promoting the formation of the first peptide bond. This is Translation initiation factor 5A (eIF5A) from Pyrobaculum islandicum (strain DSM 4184 / JCM 9189 / GEO3).